We begin with the raw amino-acid sequence, 53 residues long: UPF0391 membrane protein SG0393 (53 aa).

Transmembrane regions (helical) follow at residues 4–24 (WGII…GGLA) and 27–47 (AAWA…ISLF).

This sequence belongs to the UPF0391 family.

The protein localises to the cell membrane. This is UPF0391 membrane protein SG0393 from Sodalis glossinidius (strain morsitans).